The sequence spans 67 residues: Putative antitoxin PF1308 (67 aa).

This sequence belongs to the UPF0165 family.

In terms of biological role, possibly the antitoxin component of a type II toxin-antitoxin (TA) system. This is Putative antitoxin PF1308 from Pyrococcus furiosus (strain ATCC 43587 / DSM 3638 / JCM 8422 / Vc1).